Consider the following 605-residue polypeptide: Probable serine/threonine-protein kinase DDB_G0286481 (605 aa).

A helical transmembrane segment spans residues 5 to 25 (YQIFFLLYLLCILYVISCGYI). Asn-53 carries N-linked (GlcNAc...) asparagine glycosylation. 2 stretches are compositionally biased toward low complexity: residues 54–81 (SSNN…NNNN) and 89–104 (NCNN…NKSN). The interval 54 to 170 (SSNNNNNNNN…LGGSMGSGSQ (117 aa)) is disordered. N-linked (GlcNAc...) asparagine glycans are attached at residues Asn-92, Asn-93, Asn-97, and Asn-101. Over residues 105 to 123 (IKNKQHHHHSNFRNRRGKS) the composition is skewed to basic residues. The N-linked (GlcNAc...) asparagine glycan is linked to Asn-127. Residues 144 to 155 (QSSSYDTSELHQ) show a composition bias toward polar residues. The N-linked (GlcNAc...) asparagine glycan is linked to Asn-280. The region spanning 312-597 (YEVIQKIGRG…AKEAMKHPYF (286 aa)) is the Protein kinase domain. ATP is bound by residues 318 to 326 (IGRGKYSEV) and Lys-341. A glycan (N-linked (GlcNAc...) asparagine) is linked at Asn-390. The active-site Proton acceptor is Asp-429. Asn-601 carries N-linked (GlcNAc...) asparagine glycosylation.

Belongs to the protein kinase superfamily. CMGC Ser/Thr protein kinase family.

The protein resides in the membrane. It carries out the reaction L-seryl-[protein] + ATP = O-phospho-L-seryl-[protein] + ADP + H(+). The catalysed reaction is L-threonyl-[protein] + ATP = O-phospho-L-threonyl-[protein] + ADP + H(+). The protein is Probable serine/threonine-protein kinase DDB_G0286481 of Dictyostelium discoideum (Social amoeba).